Here is a 333-residue protein sequence, read N- to C-terminus: 2-haloacrylate reductase (333 aa).

153–159 contacts NADP(+); that stretch reads AAAGGMG.

The protein belongs to the zinc-containing alcohol dehydrogenase family.

The catalysed reaction is (S)-2-chloropropanoate + NADP(+) = 2-chloroacrylate + NADPH + H(+). Functionally, involved in the degradation of unsaturated organohalogen compounds. Catalyzes the NADPH-dependent reduction of the carbon-carbon double bond of 2-chloroacrylate to produce (S)-2-chloropropionate, which is probably further metabolized to (R)-lactate by (S)-2-haloacid dehalogenase. Can also use 2-bromoacrylate as substrate. Does not act on acrylate, methacrylate, 1,4-benzoquinone and 1,4-naphthoquinone. The chain is 2-haloacrylate reductase from Burkholderia sp.